Here is a 340-residue protein sequence, read N- to C-terminus: Dihydroorotate dehydrogenase (quinone) (340 aa).

FMN is bound by residues 62 to 66 (AGMDK) and threonine 86. Lysine 66 is a binding site for substrate. Position 111-115 (111-115 (NRMGF)) interacts with substrate. 2 residues coordinate FMN: asparagine 139 and asparagine 172. Asparagine 172 contributes to the substrate binding site. The active-site Nucleophile is serine 175. Asparagine 177 serves as a coordination point for substrate. FMN is bound by residues lysine 217 and threonine 245. 246 to 247 (NT) contacts substrate. FMN contacts are provided by residues glycine 268, glycine 297, and 318 to 319 (YS).

The protein belongs to the dihydroorotate dehydrogenase family. Type 2 subfamily. As to quaternary structure, monomer. FMN serves as cofactor.

It localises to the cell membrane. It carries out the reaction (S)-dihydroorotate + a quinone = orotate + a quinol. It participates in pyrimidine metabolism; UMP biosynthesis via de novo pathway; orotate from (S)-dihydroorotate (quinone route): step 1/1. In terms of biological role, catalyzes the conversion of dihydroorotate to orotate with quinone as electron acceptor. The chain is Dihydroorotate dehydrogenase (quinone) from Shewanella woodyi (strain ATCC 51908 / MS32).